A 457-amino-acid polypeptide reads, in one-letter code: Protein N-terminal amidase (457 aa).

Positions 19 to 453 (LKVLVIQLNP…EGAILREVQF (435 aa)) constitute a CN hydrolase domain. The Proton acceptor role is filled by glutamate 63. The active-site Proton donor is lysine 136. Cysteine 187 serves as the catalytic Nucleophile.

This sequence belongs to the carbon-nitrogen hydrolase superfamily.

Functionally, deamidates N-terminal Asn and Gln. Component of a targeting complex in the N-end rule pathway. This Saccharomyces cerevisiae (strain ATCC 204508 / S288c) (Baker's yeast) protein is Protein N-terminal amidase (NTA1).